The primary structure comprises 166 residues: Regulatory protein RecX (166 aa).

Belongs to the RecX family.

It localises to the cytoplasm. Modulates RecA activity. This is Regulatory protein RecX from Salmonella choleraesuis (strain SC-B67).